The following is a 711-amino-acid chain: Taperin (711 aa).

Disordered stretches follow at residues 134–305, 328–384, and 414–438; these read SRLL…APKP, RNSF…LGKS, and QRPSSPPPFLPAASEEAEPAEGLRV. Over residues 157–180 the composition is skewed to pro residues; sequence PPPPPPPPAPPRPPPAAPSPPAAP. The segment covering 197–206 has biased composition (polar residues); that stretch reads LQKTGSNSFT. A Phosphoserine modification is found at Ser-241. The span at 267–282 shows a compositional bias: low complexity; the sequence is TPSATPASPPASATPS. Over residues 283–296 the composition is skewed to polar residues; sequence QRQCVSAATSTNDS. Residues Ser-362, Ser-418, and Ser-463 each carry the phosphoserine modification. Disordered regions lie at residues 500–535, 572–630, 642–662, and 674–711; these read TFTVVPKRKPGTLQDQHFSQANREPRPREAEEEEAS, SRKK…EKPF, SVRPESSRLPEGSSGLSSYTP, and QALEQAPREAEPPPVEAMLTPASQNDLSDFRSEPALYF. Polar residues-rich tracts occupy residues 512 to 521 and 581 to 590; these read LQDQHFSQAN and NDKSLQTTFE. Acidic residues predominate over residues 597-624; sequence LEQEEEVDQQEEEEEEEEEEEEEEEGSG.

It belongs to the taperin family. As to quaternary structure, interacts with GRXCR2; the interaction restricts TPRN to the stereocilum basal region. Interacts with actin ACTB; the interaction may stabilize stereocilia. Interacts with CLIC5. Interacts with PTPRQ. TPRN, CLIC5 and PTPQR form concentric rings at the base of stereocilia and may form a complex. Interacts with phosphatase PPP1CA; the interaction results in inhibition of PPC1A phosphatase activity. Interacts with DNA damage response proteins XRCC6/KU70, XRCC5/KU80, PARP1, TOP1 and TOP2A; these interactions recruit TPRN to sites of DNA damage where it may play a role in DNA repair. In terms of tissue distribution, expression is detected in fetal cochlea.

The protein localises to the cell projection. It localises to the stereocilium. The protein resides in the microvillus. It is found in the nucleus. Its subcellular location is the nucleoplasm. The protein localises to the cytoplasm. Its function is as follows. Essential for hearing. Required for maintenance of stereocilia on both inner and outer hair cells. Necessary for the integrity of the stereociliary rootlet. May act as an actin cytoskeleton regulator involved in the regulation of actin dynamics at the pointed end in hair cells. Forms rings at the base of stereocilia and binds actin filaments in the stereocilia which may stabilize the stereocilia. Acts as a strong inhibitor of PPP1CA phosphatase activity. Recruited to sites of DNA damage and may play a role in DNA damage repair. This chain is Taperin (TPRN), found in Homo sapiens (Human).